The chain runs to 557 residues: Nucleoprotein (557 aa).

Positions 54-235 (MRKDKRSDDD…ITKEESANNI (182 aa)) are binding site for the cap structure m7GTP. Mn(2+)-binding residues include aspartate 379 and glutamate 381. Residues glutamate 389, cysteine 496, histidine 499, and cysteine 518 each coordinate Zn(2+). A Mn(2+)-binding site is contributed by aspartate 522.

It belongs to the arenaviridae nucleocapsid protein family. As to quaternary structure, homomultimerizes to form the nucleocapsid. Binds to viral genomic RNA. Interacts with glycoprotein G2. Interacts with protein Z; this interaction probably directs the encapsidated genome to budding sites. Interacts with protein L; this interaction does not interfere with Z-L interaction. Interacts with host IKBKE (via Protein kinase domain); the interaction inhibits IKBKE kinase activity.

Its subcellular location is the virion. It localises to the host cytoplasm. Its function is as follows. Encapsidates the genome, protecting it from nucleases. The encapsidated genomic RNA is termed the nucleocapsid (NC). Serves as template for viral transcription and replication. The increased presence of protein N in host cell does not seem to trigger the switch from transcription to replication as observed in other negative strain RNA viruses. Through the interaction with host IKBKE, strongly inhibits the phosphorylation and nuclear translocation of host IRF3, a protein involved in interferon activation pathway, leading to the inhibition of interferon-beta and IRF3-dependent promoters activation. Also encodes a functional 3'-5' exoribonuclease that degrades preferentially dsRNA substrates and thereby participates in the suppression of interferon induction. The protein is Nucleoprotein of Calomys callosus (Large vesper mouse).